A 314-amino-acid polypeptide reads, in one-letter code: Malate dehydrogenase (314 aa).

NAD(+)-binding positions include 7 to 12 and aspartate 32; that span reads GAGNVG. Substrate-binding residues include arginine 81 and arginine 87. NAD(+) is bound by residues asparagine 94 and 117 to 119; that span reads VAN. Substrate contacts are provided by asparagine 119 and arginine 150. The active-site Proton acceptor is the histidine 174.

The protein belongs to the LDH/MDH superfamily. MDH type 3 family.

It carries out the reaction (S)-malate + NAD(+) = oxaloacetate + NADH + H(+). Catalyzes the reversible oxidation of malate to oxaloacetate. This Salinibacter ruber (strain DSM 13855 / M31) protein is Malate dehydrogenase.